A 31-amino-acid chain; its full sequence is Cyclotide hyen-I (31 aa).

Positions glycine 1 to aspartate 31 form a cross-link, cyclopeptide (Gly-Asp). 3 disulfides stabilise this stretch: cysteine 5–cysteine 21, cysteine 9–cysteine 23, and cysteine 14–cysteine 28.

Post-translationally, this is a cyclic peptide. As to expression, detected in seeds (at protein level).

In terms of biological role, probably participates in a plant defense mechanism. The polypeptide is Cyclotide hyen-I (Pigea enneasperma (Spade flower)).